We begin with the raw amino-acid sequence, 234 residues long: Putative B3 domain-containing protein At2g18810 (234 aa).

Residues 55 to 88 (CKNQDPEQNPNRVASSPSLCHVKSKRPQKGVSNK) are disordered. Residues 60–72 (PEQNPNRVASSPS) show a composition bias toward polar residues. The TF-B3 DNA-binding region spans 87 to 185 (NKPILDMDFL…MLFFALVLSD (99 aa)).

It localises to the nucleus. The protein is Putative B3 domain-containing protein At2g18810 of Arabidopsis thaliana (Mouse-ear cress).